We begin with the raw amino-acid sequence, 2067 residues long: Nuclear receptor coactivator 6 (2067 aa).

A TBP/GTF2A-binding region region spans residues 1–932; the sequence is MVLDDLPNFE…PPRKKKNCHQ (932 aa). The interval 1-1060 is CREBBP-binding region; sequence MVLDDLPNFE…LPVSQNVHPP (1060 aa). The interval 1–1314 is NCOA1-binding region; the sequence is MVLDDLPNFE…QAHKLDSVVV (1314 aa). Position 95 is an asymmetric dimethylarginine (Arg-95). Disordered regions lie at residues 181–253 and 293–548; these read AVMT…RQMN and TRPL…PGNS. Over residues 293–304 the composition is skewed to low complexity; sequence TRPLQQHQQQPQ. 6 stretches are compositionally biased toward polar residues: residues 338–347, 357–372, 383–405, 421–457, 465–506, and 526–548; these read SLGTMTTNQG, MQAQ…TVQT, GSQQ…QFTA, PLQQ…QQQM, NPLS…QGPQ, and GQAN…PGNS. The segment at 777 to 931 is NCOA6IP-binding region; it reads VNNSPSQVMG…KPPRKKKNCH (155 aa). Phosphoserine is present on Ser-888. Positions 891–895 match the LXXLL motif 1 motif; the sequence is LVNLL. Disordered regions lie at residues 903 to 1279, 1313 to 1358, 1424 to 1481, 1497 to 1581, and 1769 to 1822; these read HFGV…QGLN, VVNS…APKL, NIPQ…EENK, QLLD…IPPV, and LNPD…GKGK. Over residues 907 to 916 the composition is skewed to low complexity; it reads NNKQNNTNAN. Residues 917 to 929 show a composition bias toward basic residues; the sequence is KPKKKKPPRKKKN. Low complexity predominate over residues 984-996; the sequence is QRPLPQMPPQLMQ. A compositionally biased stretch (pro residues) spans 999 to 1024; sequence APPPQPPQQQPQPQLPQQQQPPPPSQ. Over residues 1025–1044 the composition is skewed to low complexity; sequence PQSQQQQQQQQMMMMLMMQQ. An asymmetric dimethylarginine mark is found at Arg-1050 and Arg-1061. Residues 1066–1078 are compositionally biased toward polar residues; sequence PDSQRMPVQQSGN. Arg-1099 carries the post-translational modification Asymmetric dimethylarginine. The span at 1103-1123 shows a compositional bias: polar residues; sequence SVNTPMGSNSRKMVYQENPQN. The segment covering 1124–1137 has biased composition (low complexity); the sequence is SSSSPLGEMSSLPE. 3 stretches are compositionally biased toward polar residues: residues 1152–1165, 1176–1194, and 1205–1217; these read NMPS…NQLM, LSAT…SLPS, and APTQ…TPNR. A compositionally biased stretch (pro residues) spans 1222-1235; it reads PYYPQTPNNRPPST. Polar residues predominate over residues 1313 to 1324; that stretch reads VVNSGKQSNPGT. Residues 1326–1349 are compositionally biased toward low complexity; the sequence is KRASPSNSRRSSPGSSRKTTPSPG. Positions 1424–1435 are enriched in polar residues; it reads NIPQDSDCQNAQ. Positions 1495–1499 match the LXXLL motif 2 motif; that stretch reads LSQLL. The span at 1545–1562 shows a compositional bias: low complexity; that stretch reads EPSTSLSSPHSSEPCSTL. Residues 1644 to 2067 are EP300/CRSP3-binding region; it reads SEGQSAAQSN…AVQSKRRKSK (424 aa). A compositionally biased stretch (polar residues) spans 1775-1805; the sequence is SPQTNTSADQSTLPPSQPTTVVSSLLTNSPG. The segment covering 1806 to 1818 has biased composition (low complexity); the sequence is SSANRRSPVSSSK. Residues Lys-1822 and Lys-1825 each carry the N6-acetyllysine modification. Disordered regions lie at residues 1840–1911 and 1957–2067; these read GSLE…LPGG and VGSH…RKSK. Residues 1871 to 1883 are compositionally biased toward polar residues; the sequence is EQCSTELDSKTPT. Residues 1892–1904 show a composition bias toward low complexity; sequence MTSSPMAPSSTST. Residues 2005–2014 are compositionally biased toward basic and acidic residues; the sequence is EPKEIVEKSK. A Phosphoserine modification is found at Ser-2022.

As to quaternary structure, monomer and homodimer. Interacts in vitro with the basal transcription factors GTF2A and TBP, suggesting an autonomous transactivation function. Interacts with NCOA1, CRSP3, RBM14, the histone acetyltransferase proteins EP300 and CREBBP, and with methyltransferase proteins NCOA6IP and PRMT2. Interacts with RBM39. Component of the MLL2/3 complex (also named ASCOM complex), at least composed of KMT2D/MLL2 or KMT2C/MLL3, ASH2L, RBBP5, WDR5, NCOA6, DPY30, KDM6A, PAXIP1/PTIP, PAGR1 and alpha- and beta-tubulin. Interacts with ZNF335; may enhance ligand-dependent transcriptional activation by nuclear hormone receptors. In terms of processing, phosphorylated. Widely expressed. High expression in testis and weak expression in small intestine.

The protein resides in the nucleus. Nuclear receptor coactivator that directly binds nuclear receptors and stimulates the transcriptional activities in a hormone-dependent fashion. Coactivates expression in an agonist- and AF2-dependent manner. Involved in the coactivation of different nuclear receptors, such as for steroids (GR and ERs), retinoids (RARs and RXRs), thyroid hormone (TRs), vitamin D3 (VDR) and prostanoids (PPARs). Probably functions as a general coactivator, rather than just a nuclear receptor coactivator. May also be involved in the coactivation of the NF-kappa-B pathway. May coactivate expression via a remodeling of chromatin and its interaction with histone acetyltransferase proteins. Involved in placental, cardiac, hepatic and embryonic development. The protein is Nuclear receptor coactivator 6 (Ncoa6) of Mus musculus (Mouse).